The sequence spans 209 residues: Orotate phosphoribosyltransferase (209 aa).

5-phospho-alpha-D-ribose 1-diphosphate contacts are provided by residues R96, K100, H102, and 122 to 130 (EDLISTGGS). S126 is an orotate binding site.

Belongs to the purine/pyrimidine phosphoribosyltransferase family. PyrE subfamily. In terms of assembly, homodimer. Requires Mg(2+) as cofactor.

The catalysed reaction is orotidine 5'-phosphate + diphosphate = orotate + 5-phospho-alpha-D-ribose 1-diphosphate. It functions in the pathway pyrimidine metabolism; UMP biosynthesis via de novo pathway; UMP from orotate: step 1/2. In terms of biological role, catalyzes the transfer of a ribosyl phosphate group from 5-phosphoribose 1-diphosphate to orotate, leading to the formation of orotidine monophosphate (OMP). This chain is Orotate phosphoribosyltransferase, found in Streptococcus thermophilus (strain CNRZ 1066).